Reading from the N-terminus, the 343-residue chain is L-threonine 3-dehydrogenase (343 aa).

Cys40 contributes to the Zn(2+) binding site. Catalysis depends on charge relay system residues Thr42 and His45. Zn(2+) contacts are provided by His65, Glu66, Cys95, Cys98, Cys101, and Cys109. NAD(+) contacts are provided by residues Ile177, Asp197, Arg202, 264–266 (LGI), and 288–289 (IY).

The protein belongs to the zinc-containing alcohol dehydrogenase family. In terms of assembly, homotetramer. Zn(2+) serves as cofactor.

The protein localises to the cytoplasm. It catalyses the reaction L-threonine + NAD(+) = (2S)-2-amino-3-oxobutanoate + NADH + H(+). It functions in the pathway amino-acid degradation; L-threonine degradation via oxydo-reductase pathway; glycine from L-threonine: step 1/2. Catalyzes the NAD(+)-dependent oxidation of L-threonine to 2-amino-3-ketobutyrate. This Photobacterium profundum (strain SS9) protein is L-threonine 3-dehydrogenase.